Here is a 336-residue protein sequence, read N- to C-terminus: CMP-sialic acid transporter (336 aa).

The Cytoplasmic segment spans residues 1 to 9 (MAPARENVS). Residues 10–30 (LFFKLYCLTVMTLVAAAYTVA) form a helical membrane-spanning segment. Residues 31-45 (LRYTRTTAEELYFST) are Lumenal-facing. A helical membrane pass occupies residues 46-64 (TAVCITEVIKLLISVGLLA). K55 contacts CMP-N-acetyl-beta-neuraminate. The Cytoplasmic portion of the chain corresponds to 65–87 (KETGSLGRFKASLSENVLGSPKE). The chain crosses the membrane as a helical span at residues 88–108 (LAKLSVPSLVYAVQNNMAFLA). CMP-N-acetyl-beta-neuraminate is bound at residue 101–102 (QN). The Lumenal portion of the chain corresponds to 109-114 (LSNLDA). A helical transmembrane segment spans residues 115-135 (AVYQVTYQLKIPCTALCTVLM). Residue 117–124 (YQVTYQLK) coordinates CMP-N-acetyl-beta-neuraminate. The Cytoplasmic segment spans residues 136–141 (LNRTLS). Residues 142–160 (KLQWISVFMLCGGVTLVQW) traverse the membrane as a helical segment. At 161-175 (KPAQATKVVVAQNPL) the chain is on the lumenal side. A helical transmembrane segment spans residues 176–196 (LGFGAIAIAVLCSGFAGVYFE). A CMP-N-acetyl-beta-neuraminate-binding site is contributed by S188. The Cytoplasmic segment spans residues 197–209 (KVLKSSDTSLWVR). Residue 210–214 (NIQMY) coordinates CMP-N-acetyl-beta-neuraminate. Residues 210-228 (NIQMYLSGIVVTLAGTYLS) form a helical membrane-spanning segment. Topologically, residues 229–243 (DGAEIQEKGFFYGYT) are lumenal. The chain crosses the membrane as a helical span at residues 244–262 (YYVWFVIFLASVGGLYTSV). The Cytoplasmic portion of the chain corresponds to 263–269 (VVKYTDN). A helical membrane pass occupies residues 270–288 (IMKGFSAAAAIVLSTIASV). K272 provides a ligand contact to CMP-N-acetyl-beta-neuraminate. The Lumenal segment spans residues 289–296 (LLFGLQIT). The chain crosses the membrane as a helical span at residues 297–315 (LSFALGALLVCVSIYLYGL). Topologically, residues 316–336 (PRQDTTSIQQEATSKERIIGV) are cytoplasmic. Positions 316 to 336 (PRQDTTSIQQEATSKERIIGV) are disordered.

Belongs to the nucleotide-sugar transporter family. SLC35A subfamily. Monomer. Ubiquitous. Found in all the tissues examined including skeletal muscle, brain, heart, liver, kidney and spleen.

Its subcellular location is the golgi apparatus membrane. It catalyses the reaction CMP-N-acetyl-beta-neuraminate(in) + CMP(out) = CMP-N-acetyl-beta-neuraminate(out) + CMP(in). It carries out the reaction CMP-N-acetyl-beta-neuraminate(in) + AMP(out) = CMP-N-acetyl-beta-neuraminate(out) + AMP(in). The catalysed reaction is CDP-L-ribitol(in) + CDP(out) = CDP-L-ribitol(out) + CDP(in). The enzyme catalyses UMP(out) + CMP-N-acetyl-beta-neuraminate(in) = UMP(in) + CMP-N-acetyl-beta-neuraminate(out). Its function is as follows. Transports CMP-sialic acid from the cytosol into the Golgi apparatus, functioning as an antiporter that exchanges CMP-sialic acid for CMP. Binds both CMP-sialic acid and free CMP, but has higher affinity for free CMP. Also able to exchange CMP-sialic acid for AMP and UMP. Also mediates the transport of CDP-ribitol. The sequence is that of CMP-sialic acid transporter from Mus musculus (Mouse).